The following is a 284-amino-acid chain: 4-diphosphocytidyl-2-C-methyl-D-erythritol kinase (284 aa).

Residue lysine 14 is part of the active site. 98–108 (PMGGGLGGGSS) lines the ATP pocket. Residue aspartate 140 is part of the active site.

It belongs to the GHMP kinase family. IspE subfamily.

It catalyses the reaction 4-CDP-2-C-methyl-D-erythritol + ATP = 4-CDP-2-C-methyl-D-erythritol 2-phosphate + ADP + H(+). It participates in isoprenoid biosynthesis; isopentenyl diphosphate biosynthesis via DXP pathway; isopentenyl diphosphate from 1-deoxy-D-xylulose 5-phosphate: step 3/6. Its function is as follows. Catalyzes the phosphorylation of the position 2 hydroxy group of 4-diphosphocytidyl-2C-methyl-D-erythritol. In Shewanella sp. (strain MR-4), this protein is 4-diphosphocytidyl-2-C-methyl-D-erythritol kinase.